The following is a 556-amino-acid chain: Potassium-transporting ATPase potassium-binding subunit (556 aa).

10 helical membrane-spanning segments follow: residues 1–21, 60–80, 130–150, 173–193, 245–265, 281–301, 374–394, 416–436, 482–502, and 529–549; these read MTWI…GIAQ, SYAR…YALQ, GLCV…VALI, LRIL…GGAV, PQPW…FSLP, ILAA…AAEF, GLYG…LLVG, ILVM…VPGL, AALG…ILAL, and LIVF…LTLG.

Belongs to the KdpA family. The system is composed of three essential subunits: KdpA, KdpB and KdpC.

It is found in the cell membrane. In terms of biological role, part of the high-affinity ATP-driven potassium transport (or Kdp) system, which catalyzes the hydrolysis of ATP coupled with the electrogenic transport of potassium into the cytoplasm. This subunit binds the extracellular potassium ions and delivers the ions to the membrane domain of KdpB through an intramembrane tunnel. The chain is Potassium-transporting ATPase potassium-binding subunit from Cutibacterium acnes (strain DSM 16379 / KPA171202) (Propionibacterium acnes).